Here is a 70-residue protein sequence, read N- to C-terminus: uncharacterized protein (70 aa).

In terms of domain architecture, HTH cro/C1-type spans 5-59 (IREFRAKYGMTQEELAKKVGVRRETIVFLEKGKYNPSLRLAYKIARVFNARIEDL). The segment at residues 16–35 (QEELAKKVGVRRETIVFLEK) is a DNA-binding region (H-T-H motif).

This is an uncharacterized protein from Archaeoglobus fulgidus (strain ATCC 49558 / DSM 4304 / JCM 9628 / NBRC 100126 / VC-16).